Here is a 412-residue protein sequence, read N- to C-terminus: Histidinol dehydrogenase (412 aa).

Y118, Q176, and N199 together coordinate NAD(+). Substrate is bound by residues T222, Q244, and H247. Positions 244 and 247 each coordinate Zn(2+). Active-site proton acceptor residues include E311 and H312. Residues H312, D345, E399, and H404 each contribute to the substrate site. Zn(2+) is bound at residue D345. Residue H404 participates in Zn(2+) binding.

The protein belongs to the histidinol dehydrogenase family. It depends on Zn(2+) as a cofactor.

The catalysed reaction is L-histidinol + 2 NAD(+) + H2O = L-histidine + 2 NADH + 3 H(+). Its pathway is amino-acid biosynthesis; L-histidine biosynthesis; L-histidine from 5-phospho-alpha-D-ribose 1-diphosphate: step 9/9. In terms of biological role, catalyzes the sequential NAD-dependent oxidations of L-histidinol to L-histidinaldehyde and then to L-histidine. This is Histidinol dehydrogenase from Thermus thermophilus (strain ATCC BAA-163 / DSM 7039 / HB27).